A 465-amino-acid polypeptide reads, in one-letter code: MAEHKPWDGRFAEKTDDMVEAFTSSIQVDKRLYAHDITGSIAHARTLAEAGVITSDEADAMEKGLRQVKGEIEAGNFKYDDSLEDIHMHIESRLTEILGPTAAKLHTGRSRNDQIALDNRLYLRDETRRIIAMLHELRQAIVDSAQAHLDYFVPGYTHLQRAQPVLLSHHLMAYYEMFTRDSDRFTDALYRINVMPLGSAALAGTTFPLDREYTASLLGFEGVTQNSMDAVSDRDFIMEFLSDASICMVHLSRMSEELVLWSSSEFAFLNMPDAFATGSSIMPQKKNPDVPELVRGKTGRVVGSLMAILTTMKSLPMAYNRDMQEDKPPLFDAVDTLKACVAMFARMVPKLEFNRRNMFDASNQGFLNATDMADYLVEKGVPFREAHGIVGRAVAYALDRGRELHEISLNDLRKFSDKLEKDLYEALTVEHVVERRRTIGGTASVNVIAAIGRAQTQLQAETSGD.

This sequence belongs to the lyase 1 family. Argininosuccinate lyase subfamily.

The protein resides in the cytoplasm. The enzyme catalyses 2-(N(omega)-L-arginino)succinate = fumarate + L-arginine. It functions in the pathway amino-acid biosynthesis; L-arginine biosynthesis; L-arginine from L-ornithine and carbamoyl phosphate: step 3/3. This Desulfatibacillum aliphaticivorans protein is Argininosuccinate lyase.